Here is a 417-residue protein sequence, read N- to C-terminus: Probable tubulin polyglutamylase ttll-9 (417 aa).

The region spanning 23-372 (QRKKKILFKC…EKKLIGNENE (350 aa)) is the TTL domain. Residues 188-191 (QCYV), Lys201, and Asp203 contribute to the ATP site.

It belongs to the tubulin--tyrosine ligase family. As to expression, expressed in head sensory neurons.

Functionally, polyglutamylase that forms polyglutamate side chains on tubulin. Acts when complexed with other proteins. Appears to be dispensable for polar spindle formation in dividing embryonic cells, for cilia-dependent osmotic avoidance and for male mating behavior. Probably by regulating microtubule stability via the glutamylation of tubulin, regulates PLM axon developmental growth. The sequence is that of Probable tubulin polyglutamylase ttll-9 from Caenorhabditis elegans.